We begin with the raw amino-acid sequence, 455 residues long: Argininosuccinate lyase (455 aa).

This sequence belongs to the lyase 1 family. Argininosuccinate lyase subfamily.

Its subcellular location is the cytoplasm. The catalysed reaction is 2-(N(omega)-L-arginino)succinate = fumarate + L-arginine. The protein operates within amino-acid biosynthesis; L-arginine biosynthesis; L-arginine from L-ornithine and carbamoyl phosphate: step 3/3. The polypeptide is Argininosuccinate lyase (Shewanella sp. (strain MR-4)).